A 98-amino-acid chain; its full sequence is Class II hydrophobin 2 (98 aa).

An N-terminal signal peptide occupies residues 1 to 21; that stretch reads MFFSRISTIVSMTALFASALA. 4 cysteine pairs are disulfide-bonded: cysteine 34/cysteine 80, cysteine 41/cysteine 71, cysteine 42/cysteine 54, and cysteine 81/cysteine 92.

It belongs to the cerato-ulmin hydrophobin family.

It is found in the secreted. It localises to the cell wall. Its function is as follows. Aerial growth, conidiation, and dispersal of filamentous fungi in the environment rely upon a capability of their secreting small amphipathic proteins called hydrophobins (HPBs) with low sequence identity. Class I can self-assemble into an outermost layer of rodlet bundles on aerial cell surfaces, conferring cellular hydrophobicity that supports fungal growth, development and dispersal; whereas Class II form highly ordered films at water-air interfaces through intermolecular interactions but contribute nothing to the rodlet structure. In Botryotinia fuckeliana, hydrophobins are not involved in conferring surface hydrophobicity to conidia and aerial hyphae and their function in sclerotia and fruiting bodies remains to be investigated. The sequence is that of Class II hydrophobin 2 from Botryotinia fuckeliana (strain B05.10) (Noble rot fungus).